A 564-amino-acid chain; its full sequence is Iron-sensing transcriptional repressor (564 aa).

The GATA-type 1 zinc-finger motif lies at 12 to 36 (CSNCHKTTTSLWRRGPDNSLLCNAC). The segment at 100–170 (ASKSQSGRKS…SSPPHEPSVT (71 aa)) is disordered. S109 is subject to Phosphoserine. A compositionally biased stretch (low complexity) spans 109-120 (SLSPNPSSVPSS). Over residues 135 to 148 (QIVSDTTTETSNGT) the composition is skewed to polar residues. A GATA-type 2 zinc finger spans residues 172 to 196 (CQNCATTNTPLWRRDESGNPICNAC). Disordered stretches follow at residues 226–285 (GNAN…NTGV), 381–409 (DSSK…NPLG), and 443–496 (LLNP…VQGS). Composition is skewed to polar residues over residues 240 to 253 (SGDS…QSTR), 260 to 271 (SFPNGNGHASGN), 381 to 407 (DSSK…QSNP), and 450 to 486 (PSNS…SPVS).

In terms of assembly, interacts with tup11.

It localises to the nucleus. Its activity is regulated as follows. Activated by iron. Its function is as follows. Transcriptional repressor that binds the consensus promoter sequence 5'-[AT]GATAA-3' during iron-replete conditions to down-regulate transcription of target genes. Represses the expression of the iron transporter fio1 in response to high iron concentrations. Also represses the expression of str1, str2 and str3. Represses the expression of shu1 in presence of iron. The protein is Iron-sensing transcriptional repressor of Schizosaccharomyces pombe (strain 972 / ATCC 24843) (Fission yeast).